Here is a 541-residue protein sequence, read N- to C-terminus: Coiled-coil domain-containing protein 116 (541 aa).

Residues 79–102 (QVLDSLQTVVEQATERLAAMKTEA) are a coiled coil. Residues 346–397 (LPGNSDLLQPSSKASIPTNREARGEPCDSLTTAYSPKTSHRKSKGRRGSPPN) are disordered. Residues 351-363 (DLLQPSSKASIPT) are compositionally biased toward polar residues. The segment covering 383-392 (TSHRKSKGRR) has biased composition (basic residues). Serine 394 is subject to Phosphoserine.

The protein resides in the cytoplasm. It localises to the cytoskeleton. The protein localises to the microtubule organizing center. It is found in the centrosome. The protein is Coiled-coil domain-containing protein 116 (Ccdc116) of Mus musculus (Mouse).